The primary structure comprises 461 residues: Coagulation factor IX (461 aa).

The N-terminal stretch at 1-28 (MQRVNMIMAESPGLITICLLGYLLSAEC) is a signal peptide. A propeptide spanning residues 29–46 (TVFLDHENANKILNRPKR) is cleaved from the precursor. Y47, N48, E53, E54, E61, E63, E66, E67, E72, E73, and E76 together coordinate Ca(2+). Residues 47 to 92 (YNSGKLEEFVQGNLERECMEEKCSFEEAREVFENTERTTEFWKQYV) form the Gla domain. Residues E53, E54, E61, E63, E66, E67, E72, E73, E76, E79, and E82 each carry the 4-carboxyglutamate modification. Residue E61 coordinates Mg(2+). C64 and C69 are joined by a disulfide. Residue E66 participates in Mg(2+) binding. Residue E72 participates in Mg(2+) binding. A Mg(2+)-binding site is contributed by E76. A Ca(2+)-binding site is contributed by E82. E82 is a Mg(2+) binding site. T85 carries O-linked (GalNAc...) threonine glycosylation. Residues E86, D93, G94, and Q96 each contribute to the Ca(2+) site. Position 86 is a 4-carboxyglutamate (E86). Mg(2+) is bound at residue E86. One can recognise an EGF-like 1; calcium-binding domain in the interval 93 to 129 (DGDQCESNPCLNGGSCKDDINSYECWCPFGFEGKNCE). Intrachain disulfides connect C97–C108, C102–C117, C119–C128, C134–C145, C141–C155, C157–C170, C178–C335, C252–C268, C382–C396, and C407–C435. An O-linked (Glc...) serine glycan is attached at S99. An O-linked (Fuc...) serine glycan is attached at S107. Ca(2+) is bound by residues D110 and D111. D110 bears the (3R)-3-hydroxyaspartate mark. S114 bears the Phosphoserine mark. One can recognise an EGF-like 2 domain in the interval 130–171 (LDVTCNIKNGRCEQFCKNSADNKVVCSCTEGYRLAENQKSCE). A propeptide spans 192–226 (AETVFPDVDYVNSTEAETILDNITQSTQSFNDFTR) (activation peptide). Y201 carries the sulfotyrosine modification. N203 carries an N-linked (GlcNAc...) asparagine glycan. Phosphoserine is present on S204. Phosphothreonine; alternate is present on T205. A glycan (O-linked (GalNAc...) threonine; alternate) is linked at T205. N-linked (GlcNAc...) asparagine glycosylation is present at N213. Residues T215 and T225 are each glycosylated (O-linked (GalNAc...) threonine). The Peptidase S1 domain maps to 227–459 (VVGGEDAKPG…YVNWIKEKTK (233 aa)). H267 acts as the Charge relay system in catalysis. Residues E281, N283, E286, E288, and E291 each coordinate Ca(2+). D315 serves as the catalytic Charge relay system. S411 acts as the Charge relay system in catalysis.

The protein belongs to the peptidase S1 family. As to quaternary structure, heterodimer of a light chain and a heavy chain; disulfide-linked. Interacts (inactive and activated) with F11 (activated) in calcium-dependent manner. Interacts with SERPINC1. Interacts (activated) with iripin-8, a serine protease inhibitor from Ixodes ricinus saliva. Interacts (inactive and activated) with nitrophorin-2, an anticoagulant protein from Rhodnius prolixus. Activated by factor XIa, which excises the activation peptide. The propeptide can also be removed by snake venom protease. Activated by coagulation factor VIIa-tissue factor (F7-F3) complex in calcium-dependent manner. Post-translationally, the iron and 2-oxoglutarate dependent 3-hydroxylation of aspartate and asparagine is (R) stereospecific within EGF domains. As to expression, detected in blood plasma (at protein level). Synthesized primarily in the liver and secreted in plasma.

It localises to the secreted. It catalyses the reaction Selective cleavage of Arg-|-Ile bond in factor X to form factor Xa.. Functionally, factor IX is a vitamin K-dependent plasma protein that participates in the intrinsic pathway of blood coagulation by converting factor X to its active form in the presence of Ca(2+) ions, phospholipids, and factor VIIIa. The sequence is that of Coagulation factor IX (F9) from Homo sapiens (Human).